The following is a 176-amino-acid chain: ATP synthase subunit b (176 aa).

Residues 14–34 (STTLGTMIVVSGAFLILMLLL) form a helical membrane-spanning segment.

It belongs to the ATPase B chain family. As to quaternary structure, F-type ATPases have 2 components, F(1) - the catalytic core - and F(0) - the membrane proton channel. F(1) has five subunits: alpha(3), beta(3), gamma(1), delta(1), epsilon(1). F(0) has three main subunits: a(1), b(2) and c(10-14). The alpha and beta chains form an alternating ring which encloses part of the gamma chain. F(1) is attached to F(0) by a central stalk formed by the gamma and epsilon chains, while a peripheral stalk is formed by the delta and b chains.

It is found in the cell membrane. F(1)F(0) ATP synthase produces ATP from ADP in the presence of a proton or sodium gradient. F-type ATPases consist of two structural domains, F(1) containing the extramembraneous catalytic core and F(0) containing the membrane proton channel, linked together by a central stalk and a peripheral stalk. During catalysis, ATP synthesis in the catalytic domain of F(1) is coupled via a rotary mechanism of the central stalk subunits to proton translocation. Its function is as follows. Component of the F(0) channel, it forms part of the peripheral stalk, linking F(1) to F(0). In Enterococcus faecalis (strain ATCC 700802 / V583), this protein is ATP synthase subunit b.